The primary structure comprises 314 residues: Malate dehydrogenase (314 aa).

NAD(+) contacts are provided by residues 11 to 16 (GSGNIG) and Asp-35. Substrate-binding residues include Arg-84 and Arg-90. NAD(+) contacts are provided by residues Asn-97 and 120 to 122 (ITN). Residues Asn-122 and Arg-153 each coordinate substrate. Catalysis depends on His-177, which acts as the Proton acceptor.

It belongs to the LDH/MDH superfamily. MDH type 3 family.

The enzyme catalyses (S)-malate + NAD(+) = oxaloacetate + NADH + H(+). Its function is as follows. Catalyzes the reversible oxidation of malate to oxaloacetate. The protein is Malate dehydrogenase of Rickettsia canadensis (strain McKiel).